The following is a 230-amino-acid chain: Leucyl/phenylalanyl-tRNA--protein transferase (230 aa).

This sequence belongs to the L/F-transferase family.

The protein resides in the cytoplasm. The enzyme catalyses N-terminal L-lysyl-[protein] + L-leucyl-tRNA(Leu) = N-terminal L-leucyl-L-lysyl-[protein] + tRNA(Leu) + H(+). It catalyses the reaction N-terminal L-arginyl-[protein] + L-leucyl-tRNA(Leu) = N-terminal L-leucyl-L-arginyl-[protein] + tRNA(Leu) + H(+). It carries out the reaction L-phenylalanyl-tRNA(Phe) + an N-terminal L-alpha-aminoacyl-[protein] = an N-terminal L-phenylalanyl-L-alpha-aminoacyl-[protein] + tRNA(Phe). In terms of biological role, functions in the N-end rule pathway of protein degradation where it conjugates Leu, Phe and, less efficiently, Met from aminoacyl-tRNAs to the N-termini of proteins containing an N-terminal arginine or lysine. In Proteus mirabilis (strain HI4320), this protein is Leucyl/phenylalanyl-tRNA--protein transferase.